The chain runs to 166 residues: Ureidoglycolate lyase (166 aa).

This sequence belongs to the ureidoglycolate lyase family. In terms of assembly, homodimer. Ni(2+) serves as cofactor.

It carries out the reaction (S)-ureidoglycolate = urea + glyoxylate. It participates in nitrogen metabolism; (S)-allantoin degradation. Its function is as follows. Catalyzes the catabolism of the allantoin degradation intermediate (S)-ureidoglycolate, generating urea and glyoxylate. Involved in the utilization of allantoin as nitrogen source. The protein is Ureidoglycolate lyase of Agrobacterium fabrum (strain C58 / ATCC 33970) (Agrobacterium tumefaciens (strain C58)).